The primary structure comprises 132 residues: Small ribosomal subunit protein uS8 (132 aa).

The protein belongs to the universal ribosomal protein uS8 family. As to quaternary structure, part of the 30S ribosomal subunit. Contacts proteins S5 and S12.

In terms of biological role, one of the primary rRNA binding proteins, it binds directly to 16S rRNA central domain where it helps coordinate assembly of the platform of the 30S subunit. The sequence is that of Small ribosomal subunit protein uS8 from Lactobacillus helveticus (strain DPC 4571).